The chain runs to 122 residues: Large ribosomal subunit protein uL14 (122 aa).

The protein belongs to the universal ribosomal protein uL14 family. In terms of assembly, part of the 50S ribosomal subunit. Forms a cluster with proteins L3 and L19. In the 70S ribosome, L14 and L19 interact and together make contacts with the 16S rRNA in bridges B5 and B8.

In terms of biological role, binds to 23S rRNA. Forms part of two intersubunit bridges in the 70S ribosome. This Elusimicrobium minutum (strain Pei191) protein is Large ribosomal subunit protein uL14.